We begin with the raw amino-acid sequence, 486 residues long: ATP-dependent rRNA helicase RRP3 (486 aa).

Basic residues predominate over residues methionine 1–histidine 11. The interval methionine 1–alanine 52 is disordered. Residues valine 17 to glutamate 49 are a coiled coil. Residues glutamate 21–serine 38 are compositionally biased toward basic and acidic residues. Residues threonine 41 to alanine 52 are compositionally biased toward low complexity. Residues serine 66 to serine 94 carry the Q motif motif. The 173-residue stretch at isoleucine 97–cysteine 269 folds into the Helicase ATP-binding domain. An ATP-binding site is contributed by alanine 110 to threonine 117. A DEAD box motif is present at residues aspartate 216–aspartate 219. The region spanning leucine 300–valine 446 is the Helicase C-terminal domain. A disordered region spans residues arginine 459–glutamate 486. Positions alanine 476–glutamate 486 are enriched in basic and acidic residues.

It belongs to the DEAD box helicase family. DDX47/RRP3 subfamily. In terms of assembly, interacts with the SSU processome.

It is found in the nucleus. It carries out the reaction ATP + H2O = ADP + phosphate + H(+). In terms of biological role, ATP-dependent rRNA helicase required for pre-ribosomal RNA processing. Involved in the maturation of the 35S-pre-rRNA and to its cleavage to mature 18S rRNA. The sequence is that of ATP-dependent rRNA helicase RRP3 from Eremothecium gossypii (strain ATCC 10895 / CBS 109.51 / FGSC 9923 / NRRL Y-1056) (Yeast).